Here is a 432-residue protein sequence, read N- to C-terminus: Histidine--tRNA ligase (432 aa).

It belongs to the class-II aminoacyl-tRNA synthetase family. As to quaternary structure, homodimer.

It is found in the cytoplasm. The catalysed reaction is tRNA(His) + L-histidine + ATP = L-histidyl-tRNA(His) + AMP + diphosphate + H(+). The sequence is that of Histidine--tRNA ligase from Ralstonia nicotianae (strain ATCC BAA-1114 / GMI1000) (Ralstonia solanacearum).